Here is a 1297-residue protein sequence, read N- to C-terminus: DNA-directed RNA polymerase subunit beta' (1297 aa).

Residues cysteine 60, cysteine 62, cysteine 75, and cysteine 78 each coordinate Zn(2+). Aspartate 535, aspartate 537, and aspartate 539 together coordinate Mg(2+). The Zn(2+) site is built by cysteine 883, cysteine 961, cysteine 968, and cysteine 971.

The protein belongs to the RNA polymerase beta' chain family. The RNAP catalytic core consists of 2 alpha, 1 beta, 1 beta' and 1 omega subunit. When a sigma factor is associated with the core the holoenzyme is formed, which can initiate transcription. Mg(2+) is required as a cofactor. Zn(2+) serves as cofactor.

It carries out the reaction RNA(n) + a ribonucleoside 5'-triphosphate = RNA(n+1) + diphosphate. DNA-dependent RNA polymerase catalyzes the transcription of DNA into RNA using the four ribonucleoside triphosphates as substrates. The protein is DNA-directed RNA polymerase subunit beta' of Salinispora arenicola (strain CNS-205).